Reading from the N-terminus, the 233-residue chain is Large ribosomal subunit protein uL1 (233 aa).

It belongs to the universal ribosomal protein uL1 family. In terms of assembly, part of the 50S ribosomal subunit.

Its function is as follows. Binds directly to 23S rRNA. The L1 stalk is quite mobile in the ribosome, and is involved in E site tRNA release. Functionally, protein L1 is also a translational repressor protein, it controls the translation of the L11 operon by binding to its mRNA. This Shewanella putrefaciens (strain CN-32 / ATCC BAA-453) protein is Large ribosomal subunit protein uL1.